The sequence spans 790 residues: MGDVIPLKVNFDLINVDDEPFELELLRDPYSLKSWLRYIKTHEGSTLEKRVLLFERACSELPGSYKIWKSYLELRVAHVEHLNPYFHAEAFASVNDCFERSLILLHKMPVIWKLYLQFLMKQPNVTKIRCTFNSALRALPVTQHDDIWDMFTKYAEDIGGLFCIHVYRRYIQVEPRAIENYIEILCKLGLWNEAARQYEDILNRPVFLSAKRKSNYQIWLEFSELVVQHPDHTQNIDVEKVFRAGIKRFSDQAGKLWTYLAQYYIRIGDYEKARSTFYEGMNNIMTVRNFTIIFDAFVEFEEQWLSARVEASSGNANDELSIDFHMAWLEKILDKRPLYINDVLLRQNINNVDEWLRRVKFLEDDSEKVVQVYTDAIKNVNPKLAHGSLGKLFSEFARFYENFDDLEQSRIIFEKATHVPYKTVNELAQVWIDWAEMELRHQNFDAARKLIGDAVHAPRKSHISFFDESLSPQVRLHKSSKIWMYYLDLEESVGTIETTRKLYDRVFELKIATPQVVVNYANLLEENAYFEDSFKIYERGVALFSYPVAFELWNLYLTKFVKRYQGTHMERTRDLFEQALEGCPPEFSKSIYLLYADFEEKFGKAKRSISILEKAADKVKTADRLAIYNVLLVKVALNYGVLATRTVYEKAIESLSDSEVKDMCLRFAEMETKLGEIDRARLIYIHGSQYCDPRVETDYWKAWQEFEIRYGNPEETVKEMLRIKRSVQTKFSTDSLHIAKRAAKIESAAAPMDPMEQLEMEKSEGPKALAGFVLSKSNPQETSKITGEEN.

HAT repeat units lie at residues 12–44 (DLINVDDEPFELELLRDPYSLKSWLRYIKTHEG), 45–77 (STLEKRVLLFERACSELPGSYKIWKSYLELRVA), 89–121 (EAFASVNDCFERSLILLHKMPVIWKLYLQFLMK), 123–157 (PNVTKIRCTFNSALRALPVTQHDDIWDMFTKYAED), 159–190 (GGLFCIHVYRRYIQVEPRAIENYIEILCKLGL), 193–228 (EAARQYEDILNRPVFLSAKRKSNYQIWLEFSELVVQ), 233–266 (TQNIDVEKVFRAGIKRFSDQAGKLWTYLAQYYIR), 268–303 (GDYEKARSTFYEGMNNIMTVRNFTIIFDAFVEFEEQ), 331–364 (KILDKRPLYINDVLLRQNINNVDEWLRRVKFLED), 368–402 (KVVQVYTDAIKNVNPKLAHGSLGKLFSEFARFYEN), 404–440 (DDLEQSRIIFEKATHVPYKTVNELAQVWIDWAEMELR), 457–492 (APRKSHISFFDESLSPQVRLHKSSKIWMYYLDLEES), 494–526 (GTIETTRKLYDRVFELKIATPQVVVNYANLLEE), 528–562 (AYFEDSFKIYERGVALFSYPVAFELWNLYLTKFVK), 567–601 (THMERTRDLFEQALEGCPPEFSKSIYLLYADFEEK), 639–673 (YGVLATRTVYEKAIESLSDSEVKDMCLRFAEMETK), and 675–709 (GEIDRARLIYIHGSQYCDPRVETDYWKAWQEFEIR). A disordered region spans residues 769–790 (LAGFVLSKSNPQETSKITGEEN). Over residues 775-790 (SKSNPQETSKITGEEN) the composition is skewed to polar residues.

Belongs to the crooked-neck family. In terms of assembly, belongs to the 40S cdc5-associated complex (or cwf complex), a spliceosome sub-complex reminiscent of a late-stage spliceosome composed of the U2, U5 and U6 snRNAs and at least brr2, cdc5, cwf2/prp3, cwf3/syf1, cwf4/syf3, cwf5/ecm2, spp42/cwf6, cwf7/spf27, cwf8, cwf9, cwf10, cwf11, cwf12, prp45/cwf13, cwf14, cwf15, cwf16, cwf17, cwf18, cwf19, cwf20, cwf21, cwf22, cwf23, cwf24, cwf25, cwf26, cyp7/cwf27, cwf28, cwf29/ist3, lea1, msl1, prp5/cwf1, prp10, prp12/sap130, prp17, prp22, sap61, sap62, sap114, sap145, slu7, smb1, smd1, smd3, smf1, smg1 and syf2.

The protein localises to the nucleus. In terms of biological role, involved in pre-mRNA splicing and cell cycle progression. This is Pre-mRNA-splicing factor cwf3 (cwf3) from Schizosaccharomyces pombe (strain 972 / ATCC 24843) (Fission yeast).